Here is a 411-residue protein sequence, read N- to C-terminus: ATP phosphoribosyltransferase 1, chloroplastic (411 aa).

The span at 1-12 (MSLLLPTNLQQY) shows a compositional bias: polar residues. Positions 1–27 (MSLLLPTNLQQYPSSSSFPSSTPILSP) are disordered. A chloroplast-targeting transit peptide spans 1–49 (MSLLLPTNLQQYPSSSSFPSSTPILSPPPSTAFSVIVPRRRCLRLVTSC). The segment covering 13–24 (PSSSSFPSSTPI) has biased composition (low complexity). Position 50 is an N-acetylvaline (Val-50).

Belongs to the ATP phosphoribosyltransferase family. Long subfamily. Mg(2+) is required as a cofactor. As to expression, expressed in leaves and at lower levels in roots (at protein level).

It localises to the plastid. It is found in the chloroplast. It carries out the reaction 1-(5-phospho-beta-D-ribosyl)-ATP + diphosphate = 5-phospho-alpha-D-ribose 1-diphosphate + ATP. It functions in the pathway amino-acid biosynthesis; L-histidine biosynthesis; L-histidine from 5-phospho-alpha-D-ribose 1-diphosphate: step 1/9. Its activity is regulated as follows. Feedback inhibited by L-histidine. Catalyzes the condensation of ATP and 5-phosphoribose 1-diphosphate to form N'-(5'-phosphoribosyl)-ATP (PR-ATP). The polypeptide is ATP phosphoribosyltransferase 1, chloroplastic (HISN1A) (Arabidopsis thaliana (Mouse-ear cress)).